Reading from the N-terminus, the 230-residue chain is Ribonuclease 3 (230 aa).

Positions 6-135 (VSELRARYGI…FNGALFLDQG (130 aa)) constitute an RNase III domain. E48 contacts Mg(2+). D52 is a catalytic residue. Mg(2+) contacts are provided by D121 and E124. E124 is an active-site residue. Residues 161-230 (DYKTNLQEFL…AKKALEQLKA (70 aa)) form the DRBM domain.

It belongs to the ribonuclease III family. In terms of assembly, homodimer. Requires Mg(2+) as cofactor.

It is found in the cytoplasm. The catalysed reaction is Endonucleolytic cleavage to 5'-phosphomonoester.. In terms of biological role, digests double-stranded RNA. Involved in the processing of primary rRNA transcript to yield the immediate precursors to the large and small rRNAs (23S and 16S). Processes some mRNAs, and tRNAs when they are encoded in the rRNA operon. Processes pre-crRNA and tracrRNA of type II CRISPR loci if present in the organism. The sequence is that of Ribonuclease 3 from Latilactobacillus sakei subsp. sakei (strain 23K) (Lactobacillus sakei subsp. sakei).